Here is a 337-residue protein sequence, read N- to C-terminus: Tryptophan--tRNA ligase (337 aa).

ATP contacts are provided by residues 11–13 and 19–20; these read QPT and GN. The short motif at 12–20 is the 'HIGH' region element; that stretch reads PTGNLHLGN. Asp135 is an L-tryptophan binding site. ATP contacts are provided by residues 147–149, Val190, and 199–203; these read GED and KMSKS. Residues 199-203 carry the 'KMSKS' region motif; the sequence is KMSKS.

It belongs to the class-I aminoacyl-tRNA synthetase family. As to quaternary structure, homodimer.

The protein localises to the cytoplasm. The catalysed reaction is tRNA(Trp) + L-tryptophan + ATP = L-tryptophyl-tRNA(Trp) + AMP + diphosphate + H(+). Functionally, catalyzes the attachment of tryptophan to tRNA(Trp). This Synechocystis sp. (strain ATCC 27184 / PCC 6803 / Kazusa) protein is Tryptophan--tRNA ligase.